We begin with the raw amino-acid sequence, 238 residues long: Ribonuclease PH (238 aa).

Residues Arg-86 and 124 to 126 contribute to the phosphate site; that span reads GTR.

This sequence belongs to the RNase PH family. Homohexameric ring arranged as a trimer of dimers.

The catalysed reaction is tRNA(n+1) + phosphate = tRNA(n) + a ribonucleoside 5'-diphosphate. Its function is as follows. Phosphorolytic 3'-5' exoribonuclease that plays an important role in tRNA 3'-end maturation. Removes nucleotide residues following the 3'-CCA terminus of tRNAs; can also add nucleotides to the ends of RNA molecules by using nucleoside diphosphates as substrates, but this may not be physiologically important. Probably plays a role in initiation of 16S rRNA degradation (leading to ribosome degradation) during starvation. This Aliivibrio salmonicida (strain LFI1238) (Vibrio salmonicida (strain LFI1238)) protein is Ribonuclease PH.